We begin with the raw amino-acid sequence, 354 residues long: Probable L-ascorbate-6-phosphate lactonase UlaG (354 aa).

The protein belongs to the UlaG family. A divalent metal cation serves as cofactor.

Its subcellular location is the cytoplasm. The enzyme catalyses L-ascorbate 6-phosphate + H2O = 3-dehydro-L-gulonate 6-phosphate. Its pathway is cofactor degradation; L-ascorbate degradation; D-xylulose 5-phosphate from L-ascorbate: step 1/4. In terms of biological role, probably catalyzes the hydrolysis of L-ascorbate-6-P into 3-keto-L-gulonate-6-P. Is essential for L-ascorbate utilization under anaerobic conditions. This is Probable L-ascorbate-6-phosphate lactonase UlaG from Salmonella agona (strain SL483).